Here is a 113-residue protein sequence, read N- to C-terminus: uncharacterized protein (113 aa).

Helical transmembrane passes span 25 to 45 and 49 to 69; these read FGFC…CFII and FEVE…LSVW.

Its subcellular location is the host membrane. This is an uncharacterized protein from Spiroplasma citri (SpV1).